The primary structure comprises 135 residues: Small ribosomal subunit protein uS12 (135 aa).

Positions 1-24 (MPTINQLVRKGRHSKTTKSKSPAL) are disordered. A compositionally biased stretch (basic residues) spans 9-18 (RKGRHSKTTK). Asp-102 is subject to 3-methylthioaspartic acid.

This sequence belongs to the universal ribosomal protein uS12 family. In terms of assembly, part of the 30S ribosomal subunit. Contacts proteins S8 and S17. May interact with IF1 in the 30S initiation complex.

Its function is as follows. With S4 and S5 plays an important role in translational accuracy. In terms of biological role, interacts with and stabilizes bases of the 16S rRNA that are involved in tRNA selection in the A site and with the mRNA backbone. Located at the interface of the 30S and 50S subunits, it traverses the body of the 30S subunit contacting proteins on the other side and probably holding the rRNA structure together. The combined cluster of proteins S8, S12 and S17 appears to hold together the shoulder and platform of the 30S subunit. The protein is Small ribosomal subunit protein uS12 of Lactobacillus delbrueckii subsp. bulgaricus (strain ATCC 11842 / DSM 20081 / BCRC 10696 / JCM 1002 / NBRC 13953 / NCIMB 11778 / NCTC 12712 / WDCM 00102 / Lb 14).